Reading from the N-terminus, the 291-residue chain is Ribosomal RNA small subunit methyltransferase A (291 aa).

6 residues coordinate S-adenosyl-L-methionine: His-37, Leu-39, Gly-64, Glu-85, Asp-110, and Asn-131.

It belongs to the class I-like SAM-binding methyltransferase superfamily. rRNA adenine N(6)-methyltransferase family. RsmA subfamily.

The protein resides in the cytoplasm. It carries out the reaction adenosine(1518)/adenosine(1519) in 16S rRNA + 4 S-adenosyl-L-methionine = N(6)-dimethyladenosine(1518)/N(6)-dimethyladenosine(1519) in 16S rRNA + 4 S-adenosyl-L-homocysteine + 4 H(+). In terms of biological role, specifically dimethylates two adjacent adenosines (A1518 and A1519) in the loop of a conserved hairpin near the 3'-end of 16S rRNA in the 30S particle. May play a critical role in biogenesis of 30S subunits. This is Ribosomal RNA small subunit methyltransferase A from Dehalococcoides mccartyi (strain ATCC BAA-2100 / JCM 16839 / KCTC 5957 / BAV1).